The following is a 239-amino-acid chain: Ribosomal RNA small subunit methyltransferase G (239 aa).

Residues G79, F84, 130–131 (AE), and R149 each bind S-adenosyl-L-methionine. The segment at 218 to 239 (KKTKTPKKYPRQAGTPSKKPIS) is disordered.

It belongs to the methyltransferase superfamily. RNA methyltransferase RsmG family.

It is found in the cytoplasm. Specifically methylates the N7 position of a guanine in 16S rRNA. The sequence is that of Ribosomal RNA small subunit methyltransferase G from Leuconostoc mesenteroides subsp. mesenteroides (strain ATCC 8293 / DSM 20343 / BCRC 11652 / CCM 1803 / JCM 6124 / NCDO 523 / NBRC 100496 / NCIMB 8023 / NCTC 12954 / NRRL B-1118 / 37Y).